The primary structure comprises 243 residues: Terpene cyclase penB (243 aa).

The next 3 membrane-spanning stretches (helical) occupy residues 19–39, 48–68, and 78–98; these read IANIFVLGMGLGWLINYVGMI, YGMAIMPLCCNIAWEIVYSLI, and GVFIAGLTINIGVMYAAIKFA. Residue Asn-111 is glycosylated (N-linked (GlcNAc...) asparagine). The next 4 membrane-spanning stretches (helical) occupy residues 112–132, 137–157, 172–194, and 205–225; these read LSLIFFLATLGFLTGHLALAA, SLAYSWGAVVCQLLLSVGGLC, LWLSRFLGSSCTVAFASLRWMYW, and LVLWSLALFLTVDGSYGLCYW.

Belongs to the paxB family.

Its subcellular location is the membrane. It functions in the pathway secondary metabolite biosynthesis. In terms of biological role, terpene cyclase; part of the gene cluster that mediates the biosynthesis of the indole diterpenes penitrems. The geranylgeranyl diphosphate (GGPP) synthase penG catalyzes the first step in penitrem biosynthesis via conversion of farnesyl pyrophosphate and isopentyl pyrophosphate into geranylgeranyl pyrophosphate (GGPP). Condensation of indole-3-glycerol phosphate with GGPP by the prenyl transferase penC then forms 3-geranylgeranylindole (3-GGI). Epoxidation by the FAD-dependent monooxygenase penM leads to a epoxidized-GGI that is substrate of the terpene cyclase penB for cyclization to yield paspaline. Paspaline is subsequently converted to 13-desoxypaxilline by the cytochrome P450 monooxygenase penP, the latter being then converted to paxilline by the cytochrome P450 monooxygenase penQ. Paxilline is converted to beta-paxitriol via C-10 ketoreduction by the short-chain dehydrogenase PC-15 which can be monoprenylated at the C-20 by the indole diterpene prenyltransferase penD. A two-step elimination (acetylation and elimination) process performed by the O-acetyltransferase PC-16 and the P.simplicissimum ptmI-ortholog not yet identified in P.crustosum, leads to the production of the prenylated form of penijanthine. The FAD-linked oxidoreductase ptmO then converts the prenylated form of penijanthine into PC-M5 which is in turn transformed into PC-M4 by the aromatic dimethylallyltransferase PC-22. A series of oxidation steps involving 4 cytochrome P450 monooxygenases (PC-21, PC-05, PC-23, PC-20) and a FAD-dependent monooxygenase (PC-14) are required for the transformation of PC-M4 to penitrems A and E. Synthesis of these final products is proposed to proceed via penitrems D and C (PC-21, PC-05, PC-14) and penitrems B and F (PC-21, PC-05, PC-14, PC-23). The polypeptide is Terpene cyclase penB (penB) (Penicillium crustosum (Blue mold fungus)).